Here is a 71-residue protein sequence, read N- to C-terminus: Small ribosomal subunit protein bS18 (71 aa).

It belongs to the bacterial ribosomal protein bS18 family. As to quaternary structure, part of the 30S ribosomal subunit. Forms a tight heterodimer with protein bS6.

Functionally, binds as a heterodimer with protein bS6 to the central domain of the 16S rRNA, where it helps stabilize the platform of the 30S subunit. This Microcystis aeruginosa (strain NIES-843 / IAM M-2473) protein is Small ribosomal subunit protein bS18.